A 170-amino-acid chain; its full sequence is Phosphopantetheine adenylyltransferase (170 aa).

Thr-18 contacts substrate. ATP-binding positions include Thr-18–Phe-19 and His-26. Positions 50, 84, and 98 each coordinate substrate. ATP-binding positions include Gly-99–Arg-101, Glu-109, and Trp-134–Ser-140.

Belongs to the bacterial CoaD family. As to quaternary structure, homohexamer. Mg(2+) is required as a cofactor.

Its subcellular location is the cytoplasm. The catalysed reaction is (R)-4'-phosphopantetheine + ATP + H(+) = 3'-dephospho-CoA + diphosphate. It participates in cofactor biosynthesis; coenzyme A biosynthesis; CoA from (R)-pantothenate: step 4/5. Reversibly transfers an adenylyl group from ATP to 4'-phosphopantetheine, yielding dephospho-CoA (dPCoA) and pyrophosphate. The polypeptide is Phosphopantetheine adenylyltransferase (Desulfotalea psychrophila (strain LSv54 / DSM 12343)).